Reading from the N-terminus, the 346-residue chain is Melanoma-associated antigen B3 (346 aa).

Residues 1–35 (MPRGQKSTLHAREKRQQTRGQTQDHQGAQITATNK) form a disordered region. The span at 18-33 (TRGQTQDHQGAQITAT) shows a compositional bias: polar residues. An MAGE domain is found at 111–310 (LIMKTNMLVQ…SAFQFWYEEA (200 aa)).

Expressed in testis.

The polypeptide is Melanoma-associated antigen B3 (MAGEB3) (Homo sapiens (Human)).